The chain runs to 351 residues: Methylthioribose-1-phosphate isomerase (351 aa).

Substrate is bound by residues R51–A53, R94, and Q199. Residue D240 is the Proton donor of the active site. N250 to K251 is a substrate binding site.

The protein belongs to the EIF-2B alpha/beta/delta subunits family. MtnA subfamily. As to quaternary structure, homodimer.

The enzyme catalyses 5-(methylsulfanyl)-alpha-D-ribose 1-phosphate = 5-(methylsulfanyl)-D-ribulose 1-phosphate. The protein operates within amino-acid biosynthesis; L-methionine biosynthesis via salvage pathway; L-methionine from S-methyl-5-thio-alpha-D-ribose 1-phosphate: step 1/6. In terms of biological role, catalyzes the interconversion of methylthioribose-1-phosphate (MTR-1-P) into methylthioribulose-1-phosphate (MTRu-1-P). The protein is Methylthioribose-1-phosphate isomerase of Bacillus cereus (strain ZK / E33L).